We begin with the raw amino-acid sequence, 334 residues long: Anthranilate phosphoribosyltransferase (334 aa).

5-phospho-alpha-D-ribose 1-diphosphate is bound by residues Gly79, 82–83, Ser87, 89–92, 107–115, and Ser119; these read GD, NIST, and KAGNRSISS. Gly79 is an anthranilate binding site. Ser91 provides a ligand contact to Mg(2+). Asn110 serves as a coordination point for anthranilate. Arg165 provides a ligand contact to anthranilate. Positions 224 and 225 each coordinate Mg(2+).

Belongs to the anthranilate phosphoribosyltransferase family. As to quaternary structure, homodimer. Requires Mg(2+) as cofactor.

It catalyses the reaction N-(5-phospho-beta-D-ribosyl)anthranilate + diphosphate = 5-phospho-alpha-D-ribose 1-diphosphate + anthranilate. Its pathway is amino-acid biosynthesis; L-tryptophan biosynthesis; L-tryptophan from chorismate: step 2/5. In terms of biological role, catalyzes the transfer of the phosphoribosyl group of 5-phosphorylribose-1-pyrophosphate (PRPP) to anthranilate to yield N-(5'-phosphoribosyl)-anthranilate (PRA). The protein is Anthranilate phosphoribosyltransferase of Streptococcus thermophilus (strain CNRZ 1066).